The primary structure comprises 701 residues: Polyribonucleotide nucleotidyltransferase (701 aa).

Mg(2+) is bound by residues D487 and D493. In terms of domain architecture, KH spans 554–613; that stretch reads PTMIAMKIDTDKIRDVIGKGGATIRAICEETKASIDIEDDGSIKIFGESKEAAEAARQRV. Positions 623–691 constitute an S1 motif domain; it reads GKIYIGKVER…NRGRIKLSIK (69 aa).

It belongs to the polyribonucleotide nucleotidyltransferase family. In terms of assembly, component of the RNA degradosome, which is a multiprotein complex involved in RNA processing and mRNA degradation. Mg(2+) is required as a cofactor.

It is found in the cytoplasm. It carries out the reaction RNA(n+1) + phosphate = RNA(n) + a ribonucleoside 5'-diphosphate. Involved in mRNA degradation. Catalyzes the phosphorolysis of single-stranded polyribonucleotides processively in the 3'- to 5'-direction. The sequence is that of Polyribonucleotide nucleotidyltransferase from Pseudomonas syringae pv. syringae (strain B728a).